The primary structure comprises 130 residues: UPF0225 protein DR_0483 (130 aa).

This sequence belongs to the UPF0225 family.

The polypeptide is UPF0225 protein DR_0483 (Deinococcus radiodurans (strain ATCC 13939 / DSM 20539 / JCM 16871 / CCUG 27074 / LMG 4051 / NBRC 15346 / NCIMB 9279 / VKM B-1422 / R1)).